We begin with the raw amino-acid sequence, 303 residues long: Cytoplasmic envelopment protein 1 (303 aa).

Belongs to the herpesviridae cytoplasmic envelopment protein 1 family.

The protein resides in the virion. It localises to the virion tegument. Its subcellular location is the host cytoplasm. It is found in the host Golgi apparatus. Functionally, plays a critical role in cytoplasmic virus egress. Participates in the final step of tegumentation and envelope acquisition within the host cytoplasm. The protein is Cytoplasmic envelopment protein 1 of Equine herpesvirus 1 (strain Ab4p) (EHV-1).